We begin with the raw amino-acid sequence, 794 residues long: Potassium transporter 2 (794 aa).

The Cytoplasmic portion of the chain corresponds to 1–21 (MDLNLGKCCGSRSSKKESWRS). The chain crosses the membrane as a helical span at residues 22–42 (VLLLAYQSLGVVYGDLSISPL). Residues 43–64 (YVFKSTFAEDIQHSETNEEIYG) are Extracellular-facing. A helical membrane pass occupies residues 65-85 (VMSFVFWTLTLVPLLKYVFIV). Residues 86–153 (LRADDNGEGG…EKHKWLHTAL (68 aa)) are Cytoplasmic-facing. The helical transmembrane segment at 154 to 174 (LLLVLLGTCMVIGDGLLTPAI) threads the bilayer. At 175 to 193 (SVFSAVSGLELNMSKEHHQ) the chain is on the extracellular side. Residues 194 to 214 (YAVIPITCFILVCLFSLQHFG) traverse the membrane as a helical segment. At 215-217 (THR) the chain is on the cytoplasmic side. Residues 218 to 238 (VGFVFAPIVLTWLLCISGIGL) traverse the membrane as a helical segment. Residues 239-265 (YNIIQWNPHIYKALSPTYMFMFLRKTR) are Extracellular-facing. The helical transmembrane segment at 266 to 286 (VSGWMSLGGILLCITGAEAMF) threads the bilayer. Residues 287 to 294 (ADLGHFNY) lie on the Cytoplasmic side of the membrane. The chain crosses the membrane as a helical span at residues 295-315 (AAIQIAFTFLVYPALILAYMG). Residues 316-339 (QAAYLSRHHHSAHAIGFYVSVPKC) are Extracellular-facing. A helical membrane pass occupies residues 340–360 (LHWPVLAVAILASVVGSQAII). At 361–391 (SGTFSIINQSQSLGCFPRVKVIHTSDKMHGQ) the chain is on the cytoplasmic side. A helical transmembrane segment spans residues 392–412 (IYIPEINWMLMILCIAVTIGF). The Extracellular portion of the chain corresponds to 413-417 (RDVKH). A run of 2 helical transmembrane segments spans residues 418 to 438 (LGNA…CLTS) and 439 to 459 (LVIV…LLFF). Topologically, residues 460–476 (GSIELLYFSASLTKFRE) are extracellular. The chain crosses the membrane as a helical span at residues 477–497 (GAWLPILLSLIFMIIMFVWHY). At 498–794 (TTIKKYEFDL…LLEVGMVYVV (297 aa)) the chain is on the cytoplasmic side.

The protein belongs to the HAK/KUP transporter (TC 2.A.72.3) family. In terms of tissue distribution, slightly detected in roots, stems, leaves and flowers of mature plants and in potassium-starved plants.

The protein resides in the cell membrane. Low-affinity potassium transporter. Could mediate the potassium-dependent cell expansion in growing tissues. In Arabidopsis thaliana (Mouse-ear cress), this protein is Potassium transporter 2 (POT2).